Consider the following 381-residue polypeptide: Queuine tRNA-ribosyltransferase (381 aa).

Asp-96 acts as the Proton acceptor in catalysis. Substrate-binding positions include 96–100 (DSGGF), Asp-150, Gln-193, and Gly-220. The RNA binding stretch occupies residues 251–257 (GVGSPDS). Asp-270 serves as the catalytic Nucleophile. The RNA binding; important for wobble base 34 recognition stretch occupies residues 275 to 279 (TRIAR). Residues Cys-308, Cys-310, Cys-313, and His-339 each coordinate Zn(2+).

The protein belongs to the queuine tRNA-ribosyltransferase family. As to quaternary structure, homodimer. Within each dimer, one monomer is responsible for RNA recognition and catalysis, while the other monomer binds to the replacement base PreQ1. The cofactor is Zn(2+).

It carries out the reaction 7-aminomethyl-7-carbaguanine + guanosine(34) in tRNA = 7-aminomethyl-7-carbaguanosine(34) in tRNA + guanine. The protein operates within tRNA modification; tRNA-queuosine biosynthesis. Catalyzes the base-exchange of a guanine (G) residue with the queuine precursor 7-aminomethyl-7-deazaguanine (PreQ1) at position 34 (anticodon wobble position) in tRNAs with GU(N) anticodons (tRNA-Asp, -Asn, -His and -Tyr). Catalysis occurs through a double-displacement mechanism. The nucleophile active site attacks the C1' of nucleotide 34 to detach the guanine base from the RNA, forming a covalent enzyme-RNA intermediate. The proton acceptor active site deprotonates the incoming PreQ1, allowing a nucleophilic attack on the C1' of the ribose to form the product. After dissociation, two additional enzymatic reactions on the tRNA convert PreQ1 to queuine (Q), resulting in the hypermodified nucleoside queuosine (7-(((4,5-cis-dihydroxy-2-cyclopenten-1-yl)amino)methyl)-7-deazaguanosine). The chain is Queuine tRNA-ribosyltransferase from Lysinibacillus sphaericus (strain C3-41).